Here is a 340-residue protein sequence, read N- to C-terminus: NADH-quinone oxidoreductase subunit H (340 aa).

Helical transmembrane passes span 9 to 29 (IWII…VAFI), 81 to 101 (LIAP…IPFA), 113 to 133 (LLFL…AGWA), 158 to 178 (GFAL…GIVL), 184 to 204 (LWHW…ITAV), 221 to 240 (IVAG…FFLA), 245 to 264 (MVLV…LSPF), 273 to 293 (LFAW…FIFT), and 316 to 336 (VLIP…EFHW).

It belongs to the complex I subunit 1 family. As to quaternary structure, NDH-1 is composed of 14 different subunits. Subunits NuoA, H, J, K, L, M, N constitute the membrane sector of the complex.

The protein resides in the cell inner membrane. The catalysed reaction is a quinone + NADH + 5 H(+)(in) = a quinol + NAD(+) + 4 H(+)(out). Functionally, NDH-1 shuttles electrons from NADH, via FMN and iron-sulfur (Fe-S) centers, to quinones in the respiratory chain. The immediate electron acceptor for the enzyme in this species is believed to be ubiquinone. Couples the redox reaction to proton translocation (for every two electrons transferred, four hydrogen ions are translocated across the cytoplasmic membrane), and thus conserves the redox energy in a proton gradient. This subunit may bind ubiquinone. In Coxiella burnetii (strain CbuK_Q154) (Coxiella burnetii (strain Q154)), this protein is NADH-quinone oxidoreductase subunit H.